The primary structure comprises 549 residues: Chaperonin GroEL (549 aa).

ATP contacts are provided by residues 30 to 33, Lys51, 87 to 91, Gly415, 479 to 481, and Asp495; these read TLGP, DGTTT, and NAA.

The protein belongs to the chaperonin (HSP60) family. As to quaternary structure, forms a cylinder of 14 subunits composed of two heptameric rings stacked back-to-back. Interacts with the co-chaperonin GroES.

Its subcellular location is the cytoplasm. The enzyme catalyses ATP + H2O + a folded polypeptide = ADP + phosphate + an unfolded polypeptide.. Functionally, together with its co-chaperonin GroES, plays an essential role in assisting protein folding. The GroEL-GroES system forms a nano-cage that allows encapsulation of the non-native substrate proteins and provides a physical environment optimized to promote and accelerate protein folding. The chain is Chaperonin GroEL from Stenotrophomonas maltophilia (strain K279a).